A 131-amino-acid chain; its full sequence is Large ribosomal subunit protein bL17 (131 aa).

This sequence belongs to the bacterial ribosomal protein bL17 family. In terms of assembly, part of the 50S ribosomal subunit. Contacts protein L32.

The polypeptide is Large ribosomal subunit protein bL17 (Azoarcus sp. (strain BH72)).